Consider the following 728-residue polypeptide: 1,4-alpha-glucan branching enzyme GlgB (728 aa).

The Nucleophile role is filled by aspartate 405. Glutamate 458 serves as the catalytic Proton donor.

Belongs to the glycosyl hydrolase 13 family. GlgB subfamily. In terms of assembly, monomer.

The enzyme catalyses Transfers a segment of a (1-&gt;4)-alpha-D-glucan chain to a primary hydroxy group in a similar glucan chain.. It functions in the pathway glycan biosynthesis; glycogen biosynthesis. Functionally, catalyzes the formation of the alpha-1,6-glucosidic linkages in glycogen by scission of a 1,4-alpha-linked oligosaccharide from growing alpha-1,4-glucan chains and the subsequent attachment of the oligosaccharide to the alpha-1,6 position. In Shigella flexneri, this protein is 1,4-alpha-glucan branching enzyme GlgB.